The primary structure comprises 276 residues: MKVALVVLALFGVSLAASIDNIEIPPSKNIYVEPINQPEVDPSLEIVNGQEVVPHSIPYQIFLVASAGETSWTCGGSLITKRYVLTAAHCIQGAKSVHVTLGAHNLAKHEASKVTVNGRSWVIHEKYDSTNIDNDIGVIQLERNLTLTRSIQLARLPSLRDVGINLEGRTATVSGWGLTNGIFQTTTDVLRANNTIISNKECNDVFKIVQPTEVCLSIAGGRSACSGDSGGPLVIDNVQHGIVSYGSSYCRSTPSVFTRVSSYLNWLQTHSEWRAQ.

A signal peptide spans 1-16 (MKVALVVLALFGVSLA). A propeptide spans 17-45 (ASIDNIEIPPSKNIYVEPINQPEVDPSLE) (activation peptide). The Peptidase S1 domain occupies 46-272 (IVNGQEVVPH…YLNWLQTHSE (227 aa)). Cys74 and Cys90 form a disulfide bridge. Active-site charge relay system residues include His89 and Asp135. N-linked (GlcNAc...) asparagine glycans are attached at residues Asn144 and Asn193. 2 disulfides stabilise this stretch: Cys202-Cys215 and Cys225-Cys250. Ser229 acts as the Charge relay system in catalysis.

The protein belongs to the peptidase S1 family. Expressed in larval carcasses and gut, and adult gut.

It localises to the secreted. The protein resides in the extracellular space. It catalyses the reaction Preferential cleavage: Tyr-|-Xaa, Trp-|-Xaa, Phe-|-Xaa, Leu-|-Xaa.. Functionally, serine protease with chymotryptic and collagenolytic activities. The polypeptide is Chymotrypsin (Phaedon cochleariae (Mustard beetle)).